The primary structure comprises 96 residues: Dynein light chain roadblock-type 2 (96 aa).

N-acetylalanine is present on A2.

This sequence belongs to the GAMAD family. In terms of assembly, homodimer. The cytoplasmic dynein 1 complex consists of two catalytic heavy chains (HCs) and a number of non-catalytic subunits presented by intermediate chains (ICs), light intermediate chains (LICs) and light chains (LCs); the composition seems to vary in respect to the IC, LIC and LC composition. The heavy chain homodimer serves as a scaffold for the probable homodimeric assembly of the respective non-catalytic subunits. The ICs and LICs bind directly to the HC dimer and the LCs assemble on the IC dimer. Interacts with DYNC1I1 and DYNC1I2. Self-associates. Interacts with DYNLRB1.

The protein resides in the cytoplasm. Its subcellular location is the cytoskeleton. Acts as one of several non-catalytic accessory components of the cytoplasmic dynein 1 complex that are thought to be involved in linking dynein to cargos and to adapter proteins that regulate dynein function. Cytoplasmic dynein 1 acts as a motor for the intracellular retrograde motility of vesicles and organelles along microtubules. This chain is Dynein light chain roadblock-type 2 (DYNLRB2), found in Bos taurus (Bovine).